A 142-amino-acid polypeptide reads, in one-letter code: Hemoglobin subunit alpha-1/2 (142 aa).

Residues 2–142 (VLSADDKTNI…VSTVLTSKYR (141 aa)) enclose the Globin domain. Ser4 carries the post-translational modification Phosphoserine. Residue Lys8 is modified to N6-succinyllysine. Thr9 carries the phosphothreonine modification. At Lys12 the chain carries N6-succinyllysine. Residue Lys17 is modified to N6-acetyllysine; alternate. Lys17 carries the post-translational modification N6-succinyllysine; alternate. Tyr25 is subject to Phosphotyrosine. An N6-succinyllysine modification is found at Lys41. A Phosphoserine modification is found at Ser50. Position 59 (His59) interacts with O2. Position 88 (His88) interacts with heme b. Ser103 bears the Phosphoserine mark. Position 109 is a phosphothreonine (Thr109). Phosphoserine occurs at positions 125 and 132. A phosphothreonine mark is found at Thr135 and Thr138. Ser139 carries the post-translational modification Phosphoserine.

It belongs to the globin family. In terms of assembly, heterotetramer of two alpha chains and two beta chains. As to expression, red blood cells.

Involved in oxygen transport from the lung to the various peripheral tissues. Its function is as follows. Hemopressin acts as an antagonist peptide of the cannabinoid receptor CNR1. Hemopressin-binding efficiently blocks cannabinoid receptor CNR1 and subsequent signaling. In Rattus norvegicus (Rat), this protein is Hemoglobin subunit alpha-1/2 (Hba1).